The chain runs to 249 residues: Aspartate/glutamate leucyltransferase (249 aa).

This sequence belongs to the R-transferase family. Bpt subfamily.

The protein resides in the cytoplasm. The catalysed reaction is N-terminal L-glutamyl-[protein] + L-leucyl-tRNA(Leu) = N-terminal L-leucyl-L-glutamyl-[protein] + tRNA(Leu) + H(+). The enzyme catalyses N-terminal L-aspartyl-[protein] + L-leucyl-tRNA(Leu) = N-terminal L-leucyl-L-aspartyl-[protein] + tRNA(Leu) + H(+). Functions in the N-end rule pathway of protein degradation where it conjugates Leu from its aminoacyl-tRNA to the N-termini of proteins containing an N-terminal aspartate or glutamate. This Xanthobacter autotrophicus (strain ATCC BAA-1158 / Py2) protein is Aspartate/glutamate leucyltransferase.